Reading from the N-terminus, the 136-residue chain is Histone H3-7 (136 aa).

Residues 1 to 43 (MARTKQTARKSTGGKAPRKQLATKAARKSAPATGGVKKPHRYR) are disordered. R3 carries the post-translational modification Asymmetric dimethylarginine. R3 is subject to Citrulline; alternate. T4 bears the Phosphothreonine mark. K5 bears the Allysine; alternate mark. An N6,N6,N6-trimethyllysine; alternate modification is found at K5. Position 5 is an N6,N6-dimethyllysine; alternate (K5). K5 carries the N6-(2-hydroxyisobutyryl)lysine; alternate modification. An N6-(beta-hydroxybutyryl)lysine; alternate modification is found at K5. Position 5 is an N6-acetyllysine; alternate (K5). K5 carries the N6-methyllysine; alternate modification. At Q6 the chain carries 5-glutamyl dopamine; alternate. Q6 bears the 5-glutamyl serotonin; alternate mark. Position 7 is a phosphothreonine (T7). The residue at position 9 (R9) is a Citrulline; alternate. A Symmetric dimethylarginine modification is found at R9. K10 carries the N6,N6,N6-trimethyllysine; alternate modification. Residue K10 is modified to N6,N6-dimethyllysine; alternate. K10 carries the post-translational modification N6-(2-hydroxyisobutyryl)lysine; alternate. Position 10 is an N6-(beta-hydroxybutyryl)lysine; alternate (K10). Residue K10 is modified to N6-acetyllysine; alternate. K10 is modified (N6-methyllysine; alternate). K10 is subject to N6-lactoyllysine; alternate. S11 carries the post-translational modification ADP-ribosylserine; alternate. S11 carries the post-translational modification Phosphoserine; alternate. At T12 the chain carries Phosphothreonine. Residue K15 is modified to N6-(2-hydroxyisobutyryl)lysine; alternate. Position 15 is an N6-(beta-hydroxybutyryl)lysine; alternate (K15). N6-acetyllysine; alternate is present on K15. N6-lactoyllysine; alternate is present on K15. Position 15 is an N6-glutaryllysine; alternate (K15). K15 carries the N6-succinyllysine; alternate modification. R18 bears the Asymmetric dimethylarginine mark. R18 bears the Citrulline; alternate mark. N6-(2-hydroxyisobutyryl)lysine; alternate is present on residues K19 and K24. K19 and K24 each carry N6-(beta-hydroxybutyryl)lysine; alternate. Residues K19 and K24 each carry the N6-acetyllysine; alternate modification. 2 positions are modified to N6-methyllysine; alternate: K19 and K24. Residues K19 and K24 each carry the N6-lactoyllysine; alternate modification. Residues K19 and K24 each carry the N6-glutaryllysine; alternate modification. 2 positions are modified to N6-butyryllysine; alternate: K19 and K24. R27 carries the citrulline modification. An N6,N6,N6-trimethyllysine; alternate modification is found at K28. K28 bears the N6,N6-dimethyllysine; alternate mark. Position 28 is an N6-(2-hydroxyisobutyryl)lysine; alternate (K28). Position 28 is an N6-acetyllysine; alternate (K28). K28 is modified (N6-methyllysine; alternate). N6-lactoyllysine; alternate is present on K28. K28 is subject to N6-glutaryllysine; alternate. S29 carries the ADP-ribosylserine; alternate modification. At S29 the chain carries Phosphoserine; alternate. K37 is subject to N6,N6,N6-trimethyllysine; alternate. K37 carries the N6,N6-dimethyllysine; alternate modification. The residue at position 37 (K37) is an N6-(2-hydroxyisobutyryl)lysine; alternate. K37 bears the N6-acetyllysine; alternate mark. Residue K37 is modified to N6-methyllysine; alternate. K38 is subject to N6-methyllysine. A Phosphotyrosine modification is found at Y42. The residue at position 57 (K57) is an N6,N6,N6-trimethyllysine; alternate. K57 carries the N6-(2-hydroxyisobutyryl)lysine; alternate modification. Residue K57 is modified to N6-(beta-hydroxybutyryl)lysine; alternate. The residue at position 57 (K57) is an N6-acetyllysine; alternate. K57 is subject to N6-lactoyllysine; alternate. Position 57 is an N6-glutaryllysine; alternate (K57). The residue at position 57 (K57) is an N6-succinyllysine; alternate. Position 57 is an N6-methyllysine (K57). A Phosphoserine modification is found at S58. N6-(2-hydroxyisobutyryl)lysine; alternate occurs at positions 65 and 80. 2 positions are modified to N6-methyllysine; alternate: K65 and K80. K80 carries the post-translational modification N6,N6,N6-trimethyllysine; alternate. K80 bears the N6,N6-dimethyllysine; alternate mark. The residue at position 80 (K80) is an N6-acetyllysine; alternate. K80 carries the N6-lactoyllysine; alternate modification. Position 80 is an N6-glutaryllysine; alternate (K80). K80 is modified (N6-succinyllysine; alternate). T81 is modified (phosphothreonine). At S87 the chain carries Phosphoserine. T108 is subject to Phosphothreonine. Residues K116 and K123 each carry the N6-acetyllysine; alternate modification. 2 positions are modified to N6-glutaryllysine; alternate: K116 and K123. K123 carries the N6-(2-hydroxyisobutyryl)lysine; alternate modification. At K123 the chain carries N6-methyllysine; alternate. Residue K123 is modified to N6-succinyllysine; alternate.

It belongs to the histone H3 family. The nucleosome is a histone octamer containing two molecules each of H2A, H2B, H3 and H4 assembled in one H3-H4 heterotetramer and two H2A-H2B heterodimers. The octamer wraps approximately 147 bp of DNA. During nucleosome assembly the chaperone ASF1A interacts with the histone H3-H4 heterodimer. In terms of processing, acetylation is generally linked to gene activation. Acetylation on Lys-10 (H3K9ac) impairs methylation at Arg-9 (H3R8me2s). Acetylation on Lys-19 (H3K18ac) and Lys-24 (H3K24ac) favors methylation at Arg-18 (H3R17me). Acetylation at Lys-123 (H3K122ac) by EP300/p300 plays a central role in chromatin structure: localizes at the surface of the histone octamer and stimulates transcription, possibly by promoting nucleosome instability. Citrullination at Arg-9 (H3R8ci) and/or Arg-18 (H3R17ci) by PADI4 impairs methylation and represses transcription. Post-translationally, asymmetric dimethylation at Arg-18 (H3R17me2a) by CARM1 is linked to gene activation. Symmetric dimethylation at Arg-9 (H3R8me2s) by PRMT5 is linked to gene repression. Asymmetric dimethylation at Arg-3 (H3R2me2a) by PRMT6 is linked to gene repression and is mutually exclusive with H3 Lys-5 methylation (H3K4me2 and H3K4me3). H3R2me2a is present at the 3' of genes regardless of their transcription state and is enriched on inactive promoters, while it is absent on active promoters. In terms of processing, methylation at Lys-5 (H3K4me), Lys-37 (H3K36me) and Lys-80 (H3K79me) are linked to gene activation. Methylation at Lys-5 (H3K4me) facilitates subsequent acetylation of H3 and H4. Methylation at Lys-80 (H3K79me) is associated with DNA double-strand break (DSB) responses and is a specific target for TP53BP1. Methylation at Lys-10 (H3K9me) and Lys-28 (H3K27me) are linked to gene repression. Methylation at Lys-10 (H3K9me) is a specific target for HP1 proteins (CBX1, CBX3 and CBX5) and prevents subsequent phosphorylation at Ser-11 (H3S10ph) and acetylation of H3 and H4. Methylation at Lys-5 (H3K4me) and Lys-80 (H3K79me) require preliminary monoubiquitination of H2B at 'Lys-120'. Methylation at Lys-10 (H3K9me) and Lys-28 (H3K27me) are enriched in inactive X chromosome chromatin. Monomethylation at Lys-57 (H3K56me1) by EHMT2/G9A in G1 phase promotes interaction with PCNA and is required for DNA replication. Phosphorylated at Thr-4 (H3T3ph) by HASPIN during prophase and dephosphorylated during anaphase. Phosphorylation at Ser-11 (H3S10ph) by AURKB is crucial for chromosome condensation and cell-cycle progression during mitosis and meiosis. In addition phosphorylation at Ser-11 (H3S10ph) by RPS6KA4 and RPS6KA5 is important during interphase because it enables the transcription of genes following external stimulation, like mitogens, stress, growth factors or UV irradiation and result in the activation of genes, such as c-fos and c-jun. Phosphorylation at Ser-11 (H3S10ph), which is linked to gene activation, prevents methylation at Lys-10 (H3K9me) but facilitates acetylation of H3 and H4. Phosphorylation at Ser-11 (H3S10ph) by AURKB mediates the dissociation of HP1 proteins (CBX1, CBX3 and CBX5) from heterochromatin. Phosphorylation at Ser-11 (H3S10ph) is also an essential regulatory mechanism for neoplastic cell transformation. Phosphorylated at Ser-29 (H3S28ph) by MAP3K20 isoform 1, RPS6KA5 or AURKB during mitosis or upon ultraviolet B irradiation. Phosphorylation at Thr-7 (H3T6ph) by PRKCB is a specific tag for epigenetic transcriptional activation that prevents demethylation of Lys-5 (H3K4me) by LSD1/KDM1A. At centromeres, specifically phosphorylated at Thr-12 (H3T11ph) from prophase to early anaphase, by DAPK3 and PKN1. Phosphorylation at Thr-12 (H3T11ph) by PKN1 or isoform M2 of PKM (PKM2) is a specific tag for epigenetic transcriptional activation that promotes demethylation of Lys-10 (H3K9me) by KDM4C/JMJD2C. Phosphorylation at Tyr-42 (H3Y41ph) by JAK2 promotes exclusion of CBX5 (HP1 alpha) from chromatin. Post-translationally, ubiquitinated. In terms of processing, lysine deamination at Lys-5 (H3K4all) to form allysine is mediated by LOXL2. Allysine formation by LOXL2 only takes place on H3K4me3 and results in gene repression. Butyrylation of histones marks active promoters and competes with histone acetylation. It is present during late spermatogenesis. Post-translationally, succinylation at Lys-80 (H3K79succ) by KAT2A takes place with a maximum frequency around the transcription start sites of genes. It gives a specific tag for epigenetic transcription activation. Desuccinylation at Lys-123 (H3K122succ) by SIRT7 in response to DNA damage promotes chromatin condensation and double-strand breaks (DSBs) repair. In terms of processing, serine ADP-ribosylation constitutes the primary form of ADP-ribosylation of proteins in response to DNA damage. Serine ADP-ribosylation at Ser-11 (H3S10ADPr) is mutually exclusive with phosphorylation at Ser-11 (H3S10ph) and impairs acetylation at Lys-10 (H3K9ac).

Its subcellular location is the nucleus. The protein resides in the chromosome. In terms of biological role, core component of nucleosome. Nucleosomes wrap and compact DNA into chromatin, limiting DNA accessibility to the cellular machineries which require DNA as a template. Histones thereby play a central role in transcription regulation, DNA repair, DNA replication and chromosomal stability. DNA accessibility is regulated via a complex set of post-translational modifications of histones, also called histone code, and nucleosome remodeling. The chain is Histone H3-7 from Homo sapiens (Human).